The following is a 343-amino-acid chain: Zinc finger protein STP3 (343 aa).

Disordered regions lie at residues 31–56 (YNGE…SGSA) and 71–140 (SNDV…KPRK). Over residues 33–45 (GEASSASTHPTLP) the composition is skewed to polar residues. Low complexity-rich tracts occupy residues 46–56 (NMNISNGSGSA), 71–86 (SNDV…FLPS), and 94–120 (SASA…AGPS). Residues S71 and S111 each carry the phosphoserine modification. The C2H2-type zinc finger occupies 169-191 (HKCPICHRGFARNNDLLRHKKRH). A disordered region spans residues 198–222 (SQSGVLSNHNDGKGGSVSPNDDDTH).

It localises to the nucleus. The protein is Zinc finger protein STP3 (STP3) of Saccharomyces cerevisiae (strain ATCC 204508 / S288c) (Baker's yeast).